The chain runs to 143 residues: Large-conductance mechanosensitive channel (143 aa).

The next 2 membrane-spanning stretches (helical) occupy residues 10–30 (FAVK…GAFS) and 89–109 (GSFI…FLMV).

It belongs to the MscL family. Homopentamer.

It is found in the cell inner membrane. Its function is as follows. Channel that opens in response to stretch forces in the membrane lipid bilayer. May participate in the regulation of osmotic pressure changes within the cell. This Burkholderia multivorans (strain ATCC 17616 / 249) protein is Large-conductance mechanosensitive channel.